The primary structure comprises 284 residues: MDAIKKKMQAMKLEKDNAVDRAETAEQQSRDAALRAEKAEEEVRSLQKKIQQIENELDQVQEQLSQANSKLEEKDKALQAAEAEVAAHNRRIQLLEEDLERSEERLKIATQKLEEASQAADESERMRKMLEHRSITDEERMDGLEGQLKEARTMAEDADRKYDEVARKLAMVEADLERAEERAETGETKIVELEEELRVVGNNLKSLEVSEEKALQKEETYEGQIRQMTSRLQEAEARAEFAERSVQKLQKEVDRLEDELVQEKEKYKAISDELDQTFSELTGY.

Positions 1–41 (MDAIKKKMQAMKLEKDNAVDRAETAEQQSRDAALRAEKAEE) are disordered. A coiled-coil region spans residues 1–284 (MDAIKKKMQA…DQTFSELTGY (284 aa)). The segment covering 12-41 (KLEKDNAVDRAETAEQQSRDAALRAEKAEE) has biased composition (basic and acidic residues).

Belongs to the tropomyosin family. In terms of assembly, homodimer.

Its function is as follows. Tropomyosin, in association with the troponin complex, plays a central role in the calcium dependent regulation of muscle contraction. The chain is Tropomyosin from Haemaphysalis longicornis (Bush tick).